The following is a 333-amino-acid chain: Foldase protein PrsA (333 aa).

An N-terminal signal peptide occupies residues 1-22; it reads MKKSTKLLAGIVTLASAMTLAA. The N-palmitoyl cysteine moiety is linked to residue Cys-23. Cys-23 is lipidated: S-diacylglycerol cysteine. In terms of domain architecture, PpiC spans 145 to 240; that stretch reads TPEMTTQVTT…NKFYIVKVTK (96 aa). A disordered region spans residues 301-333; the sequence is DKKASKANTSKSDQKSSSDSSKDSQSSKSKSEK. The segment covering 312–322 has biased composition (basic and acidic residues); that stretch reads SDQKSSSDSSK. Positions 323–333 are enriched in low complexity; the sequence is DSQSSKSKSEK.

The protein belongs to the PrsA family.

It localises to the cell membrane. It catalyses the reaction [protein]-peptidylproline (omega=180) = [protein]-peptidylproline (omega=0). In terms of biological role, plays a major role in protein secretion by helping the post-translocational extracellular folding of several secreted proteins. In Streptococcus equi subsp. equi (strain 4047), this protein is Foldase protein PrsA.